The primary structure comprises 370 residues: UDP-N-acetylglucosamine--N-acetylmuramyl-(pentapeptide) pyrophosphoryl-undecaprenol N-acetylglucosamine transferase (370 aa).

UDP-N-acetyl-alpha-D-glucosamine contacts are provided by residues 14–16 (TGG), Asn125, Arg168, Ser196, and Gln297.

This sequence belongs to the glycosyltransferase 28 family. MurG subfamily.

The protein localises to the cell inner membrane. The catalysed reaction is di-trans,octa-cis-undecaprenyl diphospho-N-acetyl-alpha-D-muramoyl-L-alanyl-D-glutamyl-meso-2,6-diaminopimeloyl-D-alanyl-D-alanine + UDP-N-acetyl-alpha-D-glucosamine = di-trans,octa-cis-undecaprenyl diphospho-[N-acetyl-alpha-D-glucosaminyl-(1-&gt;4)]-N-acetyl-alpha-D-muramoyl-L-alanyl-D-glutamyl-meso-2,6-diaminopimeloyl-D-alanyl-D-alanine + UDP + H(+). The protein operates within cell wall biogenesis; peptidoglycan biosynthesis. In terms of biological role, cell wall formation. Catalyzes the transfer of a GlcNAc subunit on undecaprenyl-pyrophosphoryl-MurNAc-pentapeptide (lipid intermediate I) to form undecaprenyl-pyrophosphoryl-MurNAc-(pentapeptide)GlcNAc (lipid intermediate II). This Nitrobacter hamburgensis (strain DSM 10229 / NCIMB 13809 / X14) protein is UDP-N-acetylglucosamine--N-acetylmuramyl-(pentapeptide) pyrophosphoryl-undecaprenol N-acetylglucosamine transferase.